We begin with the raw amino-acid sequence, 352 residues long: Phenylalanine--tRNA ligase alpha subunit (352 aa).

Glutamate 258 serves as a coordination point for Mg(2+).

This sequence belongs to the class-II aminoacyl-tRNA synthetase family. Phe-tRNA synthetase alpha subunit type 1 subfamily. Tetramer of two alpha and two beta subunits. It depends on Mg(2+) as a cofactor.

It is found in the cytoplasm. The catalysed reaction is tRNA(Phe) + L-phenylalanine + ATP = L-phenylalanyl-tRNA(Phe) + AMP + diphosphate + H(+). The protein is Phenylalanine--tRNA ligase alpha subunit of Staphylococcus carnosus (strain TM300).